The primary structure comprises 116 residues: Cocaine- and amphetamine-regulated transcript protein (116 aa).

Positions 1–27 are cleaved as a signal peptide; sequence MESSRVRLLPLLGAALLLMLPLLGTRA. The residue at position 41 (tyrosine 41) is a Phosphotyrosine. At serine 48 the chain carries Phosphoserine. 3 cysteine pairs are disulfide-bonded: cysteine 82–cysteine 100, cysteine 88–cysteine 108, and cysteine 102–cysteine 115.

The protein belongs to the CART family. Hypothalamus. Found in neurons of the ventrolateral part of the arcuate nucleus, in the external zone of the median eminence, and also found in terminals in the periventricular part of the paraventricular nucleus.

It localises to the secreted. Its function is as follows. Satiety factor closely associated with the actions of leptin and neuropeptide Y; this anorectic peptide inhibits both normal and starvation-induced feeding and completely blocks the feeding response induced by neuropeptide Y and regulated by leptin in the hypothalamus. It promotes neuronal development and survival in vitro. This chain is Cocaine- and amphetamine-regulated transcript protein (CARTPT), found in Homo sapiens (Human).